A 657-amino-acid chain; its full sequence is Tetracycline resistance protein TetQ (657 aa).

The 244-residue stretch at 17-260 folds into the tr-type G domain; that stretch reads MNIINLGILA…AISSFILPPE (244 aa). GTP is bound by residues 26–33, 90–94, and 144–147; these read AHIDAGKT, DTPGH, and NKID.

The protein belongs to the TRAFAC class translation factor GTPase superfamily. Classic translation factor GTPase family. TetM/TetO subfamily.

In terms of biological role, abolishes the inhibitory effect of tetracycline on protein synthesis by non-covalently modifying ribosomes. Confers mild resistance to tetracycline when expressed in E.coli. The polypeptide is Tetracycline resistance protein TetQ (tetQ) (Bacteroides fragilis).